A 241-amino-acid polypeptide reads, in one-letter code: Adenosylcobinamide-GDP ribazoletransferase (241 aa).

Transmembrane regions (helical) follow at residues 24–44, 48–68, 103–123, 175–195, and 218–238; these read IVFF…SIFY, FINQ…IYGF, VVTF…FNSI, VIIL…FSLI, and IIGF…LISF.

It belongs to the CobS family. Mg(2+) is required as a cofactor.

It is found in the cell membrane. The catalysed reaction is alpha-ribazole + adenosylcob(III)inamide-GDP = adenosylcob(III)alamin + GMP + H(+). It carries out the reaction alpha-ribazole 5'-phosphate + adenosylcob(III)inamide-GDP = adenosylcob(III)alamin 5'-phosphate + GMP + H(+). It participates in cofactor biosynthesis; adenosylcobalamin biosynthesis; adenosylcobalamin from cob(II)yrinate a,c-diamide: step 7/7. Its function is as follows. Joins adenosylcobinamide-GDP and alpha-ribazole to generate adenosylcobalamin (Ado-cobalamin). Also synthesizes adenosylcobalamin 5'-phosphate from adenosylcobinamide-GDP and alpha-ribazole 5'-phosphate. In Picrophilus torridus (strain ATCC 700027 / DSM 9790 / JCM 10055 / NBRC 100828 / KAW 2/3), this protein is Adenosylcobinamide-GDP ribazoletransferase.